The primary structure comprises 237 residues: Phosphoadenosine 5'-phosphosulfate reductase (237 aa).

The active-site Nucleophile; cysteine thiosulfonate intermediate is Cys-231.

This sequence belongs to the PAPS reductase family. CysH subfamily.

The protein localises to the cytoplasm. The catalysed reaction is [thioredoxin]-disulfide + sulfite + adenosine 3',5'-bisphosphate + 2 H(+) = [thioredoxin]-dithiol + 3'-phosphoadenylyl sulfate. Its pathway is sulfur metabolism; hydrogen sulfide biosynthesis; sulfite from sulfate: step 3/3. Functionally, catalyzes the formation of sulfite from phosphoadenosine 5'-phosphosulfate (PAPS) using thioredoxin as an electron donor. The chain is Phosphoadenosine 5'-phosphosulfate reductase from Xylella fastidiosa (strain M12).